Reading from the N-terminus, the 176-residue chain is Prepronociceptin (176 aa).

The signal sequence occupies residues 1–19 (MKILFCDLLLLSLFSSVSS). Propeptides lie at residues 20–95 (SCQK…MQHL) and 169–176 (TLHQNGNA).

The protein belongs to the opioid neuropeptide precursor family. Specific enzymatic cleavages at paired basic residues probably yield other active peptides besides nociceptin. In terms of processing, the N-terminal domain contains 6 conserved cysteines thought to be involved in disulfide bonding and/or processing.

The protein resides in the secreted. Functionally, ligand of the opioid receptor-like receptor OPRL1. It may act as a transmitter in the brain by modulating nociceptive and locomotor behavior. May be involved in neuronal differentiation and development. Blocks nociceptin action in pain transmission by inhibiting nociceptin-induced hyperalgesia and allodynia. In terms of biological role, has potent analgesic activity. The sequence is that of Prepronociceptin (PNOC) from Bos taurus (Bovine).